A 137-amino-acid chain; its full sequence is Nucleoside diphosphate kinase (137 aa).

Residues lysine 11, phenylalanine 59, arginine 87, threonine 93, arginine 104, and asparagine 114 each coordinate ATP. Histidine 117 (pros-phosphohistidine intermediate) is an active-site residue.

This sequence belongs to the NDK family. As to quaternary structure, homotetramer. The cofactor is Mg(2+).

Its subcellular location is the cytoplasm. The enzyme catalyses a 2'-deoxyribonucleoside 5'-diphosphate + ATP = a 2'-deoxyribonucleoside 5'-triphosphate + ADP. It catalyses the reaction a ribonucleoside 5'-diphosphate + ATP = a ribonucleoside 5'-triphosphate + ADP. Functionally, major role in the synthesis of nucleoside triphosphates other than ATP. The ATP gamma phosphate is transferred to the NDP beta phosphate via a ping-pong mechanism, using a phosphorylated active-site intermediate. This chain is Nucleoside diphosphate kinase, found in Frankia alni (strain DSM 45986 / CECT 9034 / ACN14a).